The primary structure comprises 396 residues: Ribosomal RNA large subunit methyltransferase I (396 aa).

The PUA domain maps to 2-79 (SVFIYLVKGR…KEETVDLDFF (78 aa)).

Belongs to the methyltransferase superfamily. RlmI family.

The protein resides in the cytoplasm. It carries out the reaction cytidine(1962) in 23S rRNA + S-adenosyl-L-methionine = 5-methylcytidine(1962) in 23S rRNA + S-adenosyl-L-homocysteine + H(+). Functionally, specifically methylates the cytosine at position 1962 (m5C1962) of 23S rRNA. This Aeromonas salmonicida (strain A449) protein is Ribosomal RNA large subunit methyltransferase I.